A 93-amino-acid polypeptide reads, in one-letter code: Integration host factor subunit beta (93 aa).

The protein belongs to the bacterial histone-like protein family. Heterodimer of an alpha and a beta chain.

This protein is one of the two subunits of integration host factor, a specific DNA-binding protein that functions in genetic recombination as well as in transcriptional and translational control. The sequence is that of Integration host factor subunit beta from Aliivibrio fischeri (strain ATCC 700601 / ES114) (Vibrio fischeri).